Here is a 165-residue protein sequence, read N- to C-terminus: Phosphopantetheine adenylyltransferase (165 aa).

Ser10 serves as a coordination point for substrate. Residues Ser10–Phe11 and His18 each bind ATP. Residues Lys42, Thr79, and Arg93 each contribute to the substrate site. ATP is bound by residues Gly94–Arg96, Glu104, and Val129–Thr135.

The protein belongs to the bacterial CoaD family. Homohexamer. The cofactor is Mg(2+).

The protein resides in the cytoplasm. It carries out the reaction (R)-4'-phosphopantetheine + ATP + H(+) = 3'-dephospho-CoA + diphosphate. The protein operates within cofactor biosynthesis; coenzyme A biosynthesis; CoA from (R)-pantothenate: step 4/5. Reversibly transfers an adenylyl group from ATP to 4'-phosphopantetheine, yielding dephospho-CoA (dPCoA) and pyrophosphate. The chain is Phosphopantetheine adenylyltransferase from Rhodopseudomonas palustris (strain HaA2).